The following is a 611-amino-acid chain: Chaperone protein DnaK (611 aa).

Threonine 173 is subject to Phosphothreonine; by autocatalysis. Low complexity predominate over residues 579 to 592; that stretch reads AAGQAEGAQGAQDA. The segment at 579–598 is disordered; that stretch reads AAGQAEGAQGAQDAGAKKDN.

It belongs to the heat shock protein 70 family.

Its function is as follows. Acts as a chaperone. The protein is Chaperone protein DnaK of Bacillus cereus (strain B4264).